A 340-amino-acid chain; its full sequence is Short-chain dehydrogenase/reductase prx1 (340 aa).

NADP(+)-binding residues include I60, K84, D104, N131, and K162. The Proton donor role is filled by S184. NADP(+) contacts are provided by Y210 and K214. Y210 acts as the Proton acceptor in catalysis. K214 (lowers pKa of active site Tyr) is an active-site residue.

This sequence belongs to the short-chain dehydrogenases/reductases (SDR) family.

Its pathway is sesquiterpene biosynthesis. Its function is as follows. Short-chain dehydrogenase/reductase; part of the gene cluster that mediates the biosynthesis of PR-toxin, a bicyclic sesquiterpene belonging to the eremophilane class and acting as a mycotoxin. The first step of the pathway is catalyzed by the aristolochene synthase which performs the cyclization of trans,trans-farnesyl diphosphate (FPP) to the bicyclic sesquiterpene aristolochene. Following the formation of aristolochene, the non-oxygenated aristolochene is converted to the trioxygenated intermediate eremofortin B, via 7-epi-neopetasone. This conversion appears to involve three enzymes, a hydroxysterol oxidase-like enzyme, the quinone-oxidase prx3 that forms the quinone-type-structure in the bicyclic nucleus of aristolochene with the C8-oxo group and the C-3 hydroxyl group, and the P450 monooxygenase ORF6 that introduces the epoxide at the double bond between carbons 1 and 2. No monoxy or dioxy-intermediates have been reported to be released to the broth, so these three early oxidative reactions may be coupled together. Eremofortin B is further oxidized by another P450 monooxygenase, that introduces a second epoxide between carbons 7 and 11 prior to acetylation to eremofortin A by the acetyltransferase ORF8. The second epoxidation may be performed by a second P450 monooxygenase. After the acetylation step, eremofortin A is converted to eremofortin C and then to PR-toxin. First the conversion of eremofortin A to eremofortin C proceeds by oxidation of the side chain of the molecule at C-12 and is catalyzed by the short-chain oxidoreductase prx1. The cytochrome P450 monooxygenase ORF6 is probably also involved in this step. The primary alcohol formed at C-12 is finally oxidized by the short-chain alcohol dehydrogenase prx4 that forms PR-toxin. The polypeptide is Short-chain dehydrogenase/reductase prx1 (Penicillium roqueforti (strain FM164)).